The following is a 216-amino-acid chain: LHFPL tetraspan subfamily member 3 protein (216 aa).

A run of 4 helical transmembrane segments spans residues 22 to 42 (IGVL…VCFV), 96 to 116 (FFIG…ALFF), 126 to 146 (ICGW…MIYP), and 177 to 197 (ILAI…FVLG).

The protein belongs to the LHFP family.

It is found in the membrane. The polypeptide is LHFPL tetraspan subfamily member 3 protein (Danio rerio (Zebrafish)).